A 105-amino-acid chain; its full sequence is Large ribosomal subunit protein eL33 (105 aa).

The protein belongs to the eukaryotic ribosomal protein eL33 family.

Its function is as follows. The protein was found to bind to both initiator and elongator tRNAs and consequently was assigned to the P site or P and A site. The polypeptide is Large ribosomal subunit protein eL33 (rpl35a) (Dictyostelium discoideum (Social amoeba)).